Here is a 313-residue protein sequence, read N- to C-terminus: Dihydroorotate dehydrogenase B (NAD(+)), catalytic subunit (313 aa).

FMN-binding positions include S21 and 45-46 (KA). Substrate-binding positions include K45 and 69-73 (NAIGL). FMN contacts are provided by N99 and N127. N127 contributes to the substrate binding site. The active-site Nucleophile is C130. Residues K165 and I191 each coordinate FMN. 192–193 (NT) lines the substrate pocket. FMN is bound by residues G217, 243–244 (GG), and 265–266 (GT).

It belongs to the dihydroorotate dehydrogenase family. Type 1 subfamily. As to quaternary structure, heterotetramer of 2 PyrK and 2 PyrD type B subunits. It depends on FMN as a cofactor.

It localises to the cytoplasm. The enzyme catalyses (S)-dihydroorotate + NAD(+) = orotate + NADH + H(+). Its pathway is pyrimidine metabolism; UMP biosynthesis via de novo pathway; orotate from (S)-dihydroorotate (NAD(+) route): step 1/1. Its function is as follows. Catalyzes the conversion of dihydroorotate to orotate with NAD(+) as electron acceptor. The protein is Dihydroorotate dehydrogenase B (NAD(+)), catalytic subunit (pyrD) of Geobacillus kaustophilus (strain HTA426).